Reading from the N-terminus, the 156-residue chain is Nucleoredoxin-like protein 2 (156 aa).

Residues 9–147 form the Thioredoxin domain; the sequence is RLVTREGTVV…LACFQNWVEA (139 aa).

The protein belongs to the nucleoredoxin family. Both isoforms are expressed in retina, in the photoreceptor layer, and throughout the olfactory sensory neuron layer of the nasal epithelium, in neurons. Also expressed at low levels in brain and testis.

Functionally, may be involved in the maintenance of both the function and the viability of sensory neurons, including photoreceptors and olfactory neurons. In the retina, isoform 1 may be required for rod function and isoform 2 for cone viability and function. The sequence is that of Nucleoredoxin-like protein 2 (Nxnl2) from Mus musculus (Mouse).